Consider the following 120-residue polypeptide: MLKFTEEHEWLKIEGDVATVGITNYAVDQLGDLVFVELPEVGATFSKNGNAATVESVKAASDVYCPLDGEITEVNPAIVADPSLVNSDPQGAGWFFKLKLANPADADGLLDEAAYKELTA.

The Lipoyl-binding domain maps to 17–99; sequence VATVGITNYA…QGAGWFFKLK (83 aa). Residue K58 is modified to N6-lipoyllysine.

The protein belongs to the GcvH family. The glycine cleavage system is composed of four proteins: P, T, L and H. (R)-lipoate is required as a cofactor.

Functionally, the glycine cleavage system catalyzes the degradation of glycine. The H protein shuttles the methylamine group of glycine from the P protein to the T protein. This is Glycine cleavage system H protein from Rhizobium etli (strain ATCC 51251 / DSM 11541 / JCM 21823 / NBRC 15573 / CFN 42).